Here is a 432-residue protein sequence, read N- to C-terminus: Enolase (432 aa).

Gln167 lines the (2R)-2-phosphoglycerate pocket. Glu209 acts as the Proton donor in catalysis. 3 residues coordinate Mg(2+): Asp246, Glu291, and Asp318. The (2R)-2-phosphoglycerate site is built by Lys343, Arg372, Ser373, and Lys394. The Proton acceptor role is filled by Lys343.

This sequence belongs to the enolase family. As to quaternary structure, component of the RNA degradosome, a multiprotein complex involved in RNA processing and mRNA degradation. The cofactor is Mg(2+).

The protein resides in the cytoplasm. It localises to the secreted. It is found in the cell surface. The catalysed reaction is (2R)-2-phosphoglycerate = phosphoenolpyruvate + H2O. The protein operates within carbohydrate degradation; glycolysis; pyruvate from D-glyceraldehyde 3-phosphate: step 4/5. Its function is as follows. Catalyzes the reversible conversion of 2-phosphoglycerate (2-PG) into phosphoenolpyruvate (PEP). It is essential for the degradation of carbohydrates via glycolysis. This is Enolase from Aliivibrio fischeri (strain MJ11) (Vibrio fischeri).